Reading from the N-terminus, the 511-residue chain is Probable G-protein coupled receptor 101 (511 aa).

Over 1-35 (MPPSCTNSTQENNGSRVCLPLSKMPISVAHGIIRS) the chain is Extracellular. Residues Asn7 and Asn13 are each glycosylated (N-linked (GlcNAc...) asparagine). The chain crosses the membrane as a helical span at residues 36–56 (VVLLVILGVAFLGNVVLGYVL). At 57 to 67 (HRKPNLLQVTN) the chain is on the cytoplasmic side. Residues 68–90 (RFIFNLLVTDLLQVALVAPWVVS) traverse the membrane as a helical segment. Over 91–106 (TAIPFFWPLNIHFCTA) the chain is Extracellular. The cysteines at positions 104 and 182 are disulfide-linked. Residues 107–127 (LVSLTHLFAFASVNTIVVVSV) form a helical membrane-spanning segment. Topologically, residues 128–149 (DRYLTIIHPLSYPSKMTNRRSY) are cytoplasmic. Residues 150–170 (ILLYGTWIAAFLQSTPPLYGW) form a helical membrane-spanning segment. Residues 171-196 (GHATFDDRNAFCSMIWGASPAYTVVS) are Extracellular-facing. The helical transmembrane segment at 197–217 (VVSFLVIPLGVMIACYSVVFG) threads the bilayer. Residues 218-398 (AARRQQALLY…PPCYECKAAR (181 aa)) lie on the Cytoplasmic side of the membrane. A compositionally biased stretch (basic and acidic residues) spans 240 to 261 (DSVVHENEEGAKKRDEFQDKNE). Disordered stretches follow at residues 240 to 315 (DSVV…EVSN) and 367 to 386 (EAMR…TSDP). Residues 376-385 (PPSRRNSTSD) are compositionally biased toward polar residues. A helical transmembrane segment spans residues 399–419 (VIFVIISTYVLSLGPYCFLAV). Over 420–432 (LAVWVDIDTRVPQ) the chain is Extracellular. Residues 433 to 453 (WVITIIIWLFFLQCCIHPYVY) traverse the membrane as a helical segment. Over 454 to 511 (GYMHKSIKKEIQEVLKKLICKKSPPVEDSHPDLHETEAGTEGGIEGKAVPSHDSATSP) the chain is Cytoplasmic. The segment at 476–511 (SPPVEDSHPDLHETEAGTEGGIEGKAVPSHDSATSP) is disordered. Positions 477–490 (PPVEDSHPDLHETE) are enriched in basic and acidic residues.

It belongs to the G-protein coupled receptor 1 family. Expressed in the brain in hypothalamus.

Its subcellular location is the cell membrane. Its function is as follows. Orphan receptor. In Mus musculus (Mouse), this protein is Probable G-protein coupled receptor 101 (Gpr101).